We begin with the raw amino-acid sequence, 301 residues long: Glycerol-3-phosphate dehydrogenase [NAD(P)+] (301 aa).

3 residues coordinate NADPH: Trp13, Arg33, and Lys78. Residues Lys78 and Gly106 each coordinate sn-glycerol 3-phosphate. Ala110 is an NADPH binding site. Sn-glycerol 3-phosphate contacts are provided by Lys161, Asp214, Ser224, Arg225, and Asn226. The active-site Proton acceptor is the Lys161. An NADPH-binding site is contributed by Arg225. Residue Glu251 coordinates NADPH.

The protein belongs to the NAD-dependent glycerol-3-phosphate dehydrogenase family.

The protein localises to the cytoplasm. It catalyses the reaction sn-glycerol 3-phosphate + NAD(+) = dihydroxyacetone phosphate + NADH + H(+). The enzyme catalyses sn-glycerol 3-phosphate + NADP(+) = dihydroxyacetone phosphate + NADPH + H(+). The protein operates within membrane lipid metabolism; glycerophospholipid metabolism. In terms of biological role, catalyzes the reduction of the glycolytic intermediate dihydroxyacetone phosphate (DHAP) to sn-glycerol 3-phosphate (G3P), the key precursor for phospholipid synthesis. This is Glycerol-3-phosphate dehydrogenase [NAD(P)+] from Synechococcus sp. (strain RCC307).